The chain runs to 429 residues: MIEPRDELGTATTDSAQKILLLGSGELGKEIAIEAQRLGVEVIAVDRYANAPAMQVAHRSYVGNMMDKDFLWSVVEREKPDAIIPEIEAINLDALFEFEKEGYFVVPNARATWIAMHRERLRETLVKEAKVPTSRYMYATTLDELYEACEKIGYPCHTKAIMSSSGKGSYFVKGPEDIPKAWEEAKTKARGSAEKIIVEEHIDFDVEITELAVRHFDENGEIVTTFPKPVGHYQIDGDYHASWQPAEISEKAEREVYRIAKRITDVLGGLGLFGVEMFVKGDKVWANEVSPRPHDTGMVTLASHPPGFSEFGLHLRAVLGLPIPGEWVDGYRLFPMLIPAATHVIKAKVKGYSPRFRGLAKALSVPNATVRLFGKPEAYVGRRLGVVLAWDKDVQEAKKRAEMVAHMIELRTRSSDWHDQNYEKRKHLL.

Residues 26–27 and glutamate 86 each bind N(1)-(5-phospho-beta-D-ribosyl)glycinamide; that span reads EL. ATP-binding positions include arginine 118, lysine 159, 199-202, and glutamate 207; that span reads EEHI. Positions 123–319 constitute an ATP-grasp domain; sequence ETLVKEAKVP…EFGLHLRAVL (197 aa). Positions 276 and 288 each coordinate Mg(2+). N(1)-(5-phospho-beta-D-ribosyl)glycinamide is bound by residues aspartate 295, lysine 375, and 382–383; that span reads RR.

Belongs to the PurK/PurT family. In terms of assembly, homodimer.

The catalysed reaction is N(1)-(5-phospho-beta-D-ribosyl)glycinamide + formate + ATP = N(2)-formyl-N(1)-(5-phospho-beta-D-ribosyl)glycinamide + ADP + phosphate + H(+). It functions in the pathway purine metabolism; IMP biosynthesis via de novo pathway; N(2)-formyl-N(1)-(5-phospho-D-ribosyl)glycinamide from N(1)-(5-phospho-D-ribosyl)glycinamide (formate route): step 1/1. Involved in the de novo purine biosynthesis. Catalyzes the transfer of formate to 5-phospho-ribosyl-glycinamide (GAR), producing 5-phospho-ribosyl-N-formylglycinamide (FGAR). Formate is provided by PurU via hydrolysis of 10-formyl-tetrahydrofolate. The chain is Formate-dependent phosphoribosylglycinamide formyltransferase from Pyrococcus abyssi (strain GE5 / Orsay).